The chain runs to 485 residues: Glycogen synthase (485 aa).

Lys-18 contacts ADP-alpha-D-glucose.

Belongs to the glycosyltransferase 1 family. Bacterial/plant glycogen synthase subfamily.

The catalysed reaction is [(1-&gt;4)-alpha-D-glucosyl](n) + ADP-alpha-D-glucose = [(1-&gt;4)-alpha-D-glucosyl](n+1) + ADP + H(+). It functions in the pathway glycan biosynthesis; glycogen biosynthesis. Its function is as follows. Synthesizes alpha-1,4-glucan chains using ADP-glucose. In Dechloromonas aromatica (strain RCB), this protein is Glycogen synthase.